The sequence spans 212 residues: MPVHEIRHPLVRHKLGIMRRVDLSTKSFRELSQEVAALLTYEASKDMALAPATVEGWCGTVEVEKIAGKKVTVVPILRAGIGMLDGVLSLIPGAKVSVVGLARNEETLQAHTYLERLVGELDQRLALIVDPMLATGGSMVATIDMLKRAGAREIRALTLVAAPEGIKAVLDAHPDVNIYTASIDQGLNEQGYIMPGLGDAGDRIFGTKQKVE.

Residues R78, R103, and 130–138 (DPMLATGGS) contribute to the 5-phospho-alpha-D-ribose 1-diphosphate site. Residues I193 and 198–200 (GDA) each bind uracil. A 5-phospho-alpha-D-ribose 1-diphosphate-binding site is contributed by D199.

The protein belongs to the UPRTase family. It depends on Mg(2+) as a cofactor.

It catalyses the reaction UMP + diphosphate = 5-phospho-alpha-D-ribose 1-diphosphate + uracil. The protein operates within pyrimidine metabolism; UMP biosynthesis via salvage pathway; UMP from uracil: step 1/1. Its activity is regulated as follows. Allosterically activated by GTP. In terms of biological role, catalyzes the conversion of uracil and 5-phospho-alpha-D-ribose 1-diphosphate (PRPP) to UMP and diphosphate. This Bordetella avium (strain 197N) protein is Uracil phosphoribosyltransferase.